A 218-amino-acid polypeptide reads, in one-letter code: Tubulin polymerization-promoting protein (218 aa).

A disordered region spans residues 1–45 (MADSKAKPTKAANKTPPKSPGDPAKAAKRLSLESEGANEGAAAAP). Positions 2–115 (ADSKAKPTKA…SCRTITFEQF (114 aa)) are mediates interaction with LIMK1. Residue threonine 15 is modified to Phosphothreonine. Phosphoserine occurs at positions 19, 31, and 34. Residues 33–45 (ESEGANEGAAAAP) show a composition bias toward low complexity. Positions 60, 71, 79, and 82 each coordinate Zn(2+). Threonine 91 carries the phosphothreonine modification. At serine 106 the chain carries Phosphoserine. Serine 151 carries an O-linked (GlcNAc) serine glycan. Serine 158 and serine 159 each carry phosphoserine. Residues 165–192 (LTDTSKFTGSHKERFDQSGKGKGKAGRV) are disordered. Positions 174-183 (SHKERFDQSG) are enriched in basic and acidic residues.

It belongs to the TPPP family. As to quaternary structure, homodimer. Binds tubulin; binding is inhibited by GTP. Interacts with MAPK1. Interacts with GAPDH; the interaction is direct. Interacts with LIMK1 (via the PDZ domain); the interaction is direct. Interacts with LIMK2. Interacts with HDAC6; thereby inhibiting the tubulin deacetylase activity of HDAC6. Interacts with aggregated SNCA; may have a pro-aggregatory role in synucleinopathies. Interacts with DYNLL1. Interacts (via C-terminus) with S100A2, S100A6 and S100B; these interactions inhibit TPPP dimerization. It depends on Mg(2+) as a cofactor. Phosphorylated by LIMK1 on serine residues; phosphorylation may alter the tubulin polymerization activity. Phosphorylation by LIMK2, but not LIMK1, regulates astral microtubule organization at early stage of mitosis. Phosphorylation by ROCK1 at Ser-31, Ser-106 and Ser-158 inhibits interaction with HDAC6, resulting in decreased acetylation of tubulin, increased cell motility and entry into S-phase. Phosphorylation by CDK1 inhibits the microtubule polymerizing activity. In terms of processing, degraded by the proteasome; zinc-binding inhibits degradation by the proteasome. As to expression, predominantly expressed in mature oligodendrocytes.

Its subcellular location is the golgi outpost. It is found in the cytoplasm. It localises to the cytoskeleton. The protein resides in the microtubule organizing center. The protein localises to the nucleus. Its subcellular location is the spindle. The enzyme catalyses GTP + H2O = GDP + phosphate + H(+). Its function is as follows. Regulator of microtubule dynamics that plays a key role in myelination by promoting elongation of the myelin sheath. Acts as a microtubule nucleation factor in oligodendrocytes: specifically localizes to the postsynaptic Golgi apparatus region, also named Golgi outpost, and promotes microtubule nucleation, an important step for elongation of the myelin sheath. Required for both uniform polarized growth of distal microtubules as well as directing the branching of proximal processes. Shows magnesium-dependent GTPase activity; the role of the GTPase activity is unclear. In addition to microtubule nucleation activity, also involved in microtubule bundling and stabilization of existing microtubules, thereby maintaining the integrity of the microtubule network. Regulates microtubule dynamics by promoting tubulin acetylation: acts by inhibiting the tubulin deacetylase activity of HDAC6. Also regulates cell migration: phosphorylation by ROCK1 inhibits interaction with HDAC6, resulting in decreased acetylation of tubulin and increased cell motility. Plays a role in cell proliferation by regulating the G1/S-phase transition. Involved in astral microtubule organization and mitotic spindle orientation during early stage of mitosis; this process is regulated by phosphorylation by LIMK2. In Rattus norvegicus (Rat), this protein is Tubulin polymerization-promoting protein.